Here is a 750-residue protein sequence, read N- to C-terminus: Polyribonucleotide nucleotidyltransferase (750 aa).

The Mg(2+) site is built by Asp523 and Asp529. Residues Pro589–Ile648 form the KH domain. The S1 motif domain occupies Gly660–Val729.

This sequence belongs to the polyribonucleotide nucleotidyltransferase family. Requires Mg(2+) as cofactor.

The protein localises to the cytoplasm. The enzyme catalyses RNA(n+1) + phosphate = RNA(n) + a ribonucleoside 5'-diphosphate. Involved in mRNA degradation. Catalyzes the phosphorolysis of single-stranded polyribonucleotides processively in the 3'- to 5'-direction. This chain is Polyribonucleotide nucleotidyltransferase, found in Saccharopolyspora erythraea (strain ATCC 11635 / DSM 40517 / JCM 4748 / NBRC 13426 / NCIMB 8594 / NRRL 2338).